We begin with the raw amino-acid sequence, 204 residues long: Recombination protein RecR (204 aa).

The segment at Cys58–Cys75 adopts a C4-type zinc-finger fold. In terms of domain architecture, Toprim spans Thr83–Pro181.

Belongs to the RecR family.

Its function is as follows. May play a role in DNA repair. It seems to be involved in an RecBC-independent recombinational process of DNA repair. It may act with RecF and RecO. The protein is Recombination protein RecR of Chlorobium luteolum (strain DSM 273 / BCRC 81028 / 2530) (Pelodictyon luteolum).